The sequence spans 338 residues: CRISPR-associated endonuclease Cas1 (338 aa).

Mn(2+) is bound by residues glutamate 165, histidine 230, and glutamate 245.

The protein belongs to the CRISPR-associated endonuclease Cas1 family. In terms of assembly, homodimer, forms a heterotetramer with a Cas2 homodimer. It depends on Mg(2+) as a cofactor. Requires Mn(2+) as cofactor.

Its function is as follows. CRISPR (clustered regularly interspaced short palindromic repeat), is an adaptive immune system that provides protection against mobile genetic elements (viruses, transposable elements and conjugative plasmids). CRISPR clusters contain spacers, sequences complementary to antecedent mobile elements, and target invading nucleic acids. CRISPR clusters are transcribed and processed into CRISPR RNA (crRNA). Acts as a dsDNA endonuclease. Involved in the integration of spacer DNA into the CRISPR cassette. The protein is CRISPR-associated endonuclease Cas1 of Fusobacterium nucleatum subsp. nucleatum (strain ATCC 25586 / DSM 15643 / BCRC 10681 / CIP 101130 / JCM 8532 / KCTC 2640 / LMG 13131 / VPI 4355).